The sequence spans 161 residues: Large ribosomal subunit protein uL15 (161 aa).

Positions 1 to 41 (MTKLNELAPAPGSTKGRMRVGRGPGSGKGKTAGRGVKGQKA) are disordered. A compositionally biased stretch (gly residues) spans 22-36 (RGPGSGKGKTAGRGV).

It belongs to the universal ribosomal protein uL15 family. In terms of assembly, part of the 50S ribosomal subunit.

In terms of biological role, binds to the 23S rRNA. The protein is Large ribosomal subunit protein uL15 of Caulobacter sp. (strain K31).